A 267-amino-acid chain; its full sequence is uncharacterized protein (267 aa).

One copy of the WD repeat lies at 50 to 90 (PGLNAVTASKFSPDGRWLLNIADGSGYVQLWDTAKGERVKT).

This is an uncharacterized protein from Deinococcus radiodurans (strain ATCC 13939 / DSM 20539 / JCM 16871 / CCUG 27074 / LMG 4051 / NBRC 15346 / NCIMB 9279 / VKM B-1422 / R1).